Reading from the N-terminus, the 123-residue chain is Small ribosomal subunit protein uS13 (123 aa).

The disordered stretch occupies residues 96 to 123 (GLPVRGQRTKTNARTRKGPKKTVAGKKK).

Belongs to the universal ribosomal protein uS13 family. Part of the 30S ribosomal subunit. Forms a loose heterodimer with protein S19. Forms two bridges to the 50S subunit in the 70S ribosome.

Its function is as follows. Located at the top of the head of the 30S subunit, it contacts several helices of the 16S rRNA. In the 70S ribosome it contacts the 23S rRNA (bridge B1a) and protein L5 of the 50S subunit (bridge B1b), connecting the 2 subunits; these bridges are implicated in subunit movement. Contacts the tRNAs in the A and P-sites. The polypeptide is Small ribosomal subunit protein uS13 (Nocardia farcinica (strain IFM 10152)).